Consider the following 88-residue polypeptide: Small ribosomal subunit protein uS15 (88 aa).

The protein belongs to the universal ribosomal protein uS15 family. Part of the 30S ribosomal subunit. Forms a bridge to the 50S subunit in the 70S ribosome, contacting the 23S rRNA.

Functionally, one of the primary rRNA binding proteins, it binds directly to 16S rRNA where it helps nucleate assembly of the platform of the 30S subunit by binding and bridging several RNA helices of the 16S rRNA. Forms an intersubunit bridge (bridge B4) with the 23S rRNA of the 50S subunit in the ribosome. In Acidobacterium capsulatum (strain ATCC 51196 / DSM 11244 / BCRC 80197 / JCM 7670 / NBRC 15755 / NCIMB 13165 / 161), this protein is Small ribosomal subunit protein uS15.